The chain runs to 1299 residues: DNA-directed RNA polymerase subunit beta' (1299 aa).

Cys-60, Cys-62, Cys-75, and Cys-78 together coordinate Zn(2+). Mg(2+) contacts are provided by Asp-535, Asp-537, and Asp-539. 4 residues coordinate Zn(2+): Cys-877, Cys-954, Cys-961, and Cys-964.

Belongs to the RNA polymerase beta' chain family. In terms of assembly, the RNAP catalytic core consists of 2 alpha, 1 beta, 1 beta' and 1 omega subunit. When a sigma factor is associated with the core the holoenzyme is formed, which can initiate transcription. Requires Mg(2+) as cofactor. The cofactor is Zn(2+).

It carries out the reaction RNA(n) + a ribonucleoside 5'-triphosphate = RNA(n+1) + diphosphate. DNA-dependent RNA polymerase catalyzes the transcription of DNA into RNA using the four ribonucleoside triphosphates as substrates. This Pseudarthrobacter chlorophenolicus (strain ATCC 700700 / DSM 12829 / CIP 107037 / JCM 12360 / KCTC 9906 / NCIMB 13794 / A6) (Arthrobacter chlorophenolicus) protein is DNA-directed RNA polymerase subunit beta'.